Reading from the N-terminus, the 87-residue chain is Small ribosomal subunit protein bS20 (87 aa).

The protein belongs to the bacterial ribosomal protein bS20 family.

Its function is as follows. Binds directly to 16S ribosomal RNA. In Clostridium botulinum (strain Eklund 17B / Type B), this protein is Small ribosomal subunit protein bS20.